The following is a 568-amino-acid chain: Multidrug and toxin extrusion protein 1 (568 aa).

M1 carries the post-translational modification N-acetylmethionine. Residues 1–36 (MEAPVELGPGGRQASPERRHWLRCLVLSDFREELRA) are Cytoplasmic-facing. A helical membrane pass occupies residues 37 to 57 (LLVLACPAFLAQLMVFLISFV). Over 58–71 (SSVFCGHLSKLELN) the chain is Extracellular. Residues 72–92 (AVTLAIAVINVMGVSVGFGLS) traverse the membrane as a helical segment. The Cytoplasmic portion of the chain corresponds to 93-119 (SACDTLISQTYGSRNLKHVGVILQRGS). A helical transmembrane segment spans residues 120 to 140 (LILLLCCLPCWALFLNTQHIL). Topologically, residues 141-151 (LLFRQDPAVSR) are extracellular. A helical membrane pass occupies residues 152–172 (LTQTYVTIFIPALPATFLYTL). Residues 173 to 175 (QVK) lie on the Cytoplasmic side of the membrane. Residues 176–196 (YLLNQGIVLPQVVTGVAANLV) traverse the membrane as a helical segment. Residues 197 to 214 (NALANYLFVYQLHLGVMG) lie on the Extracellular side of the membrane. The helical transmembrane segment at 215-235 (SALANTVAQFTLALLLFLYIL) threads the bilayer. The Cytoplasmic portion of the chain corresponds to 236-255 (RSKVYQATWGGWSLECLQDW). Residues 256–278 (ASFFRLAIPSMLMLCMEWWAYEI) traverse the membrane as a helical segment. The Extracellular portion of the chain corresponds to 279–294 (GSFLSGILGMVELGAQ). The helical transmembrane segment at 295 to 315 (SVTYELAVIVYMIPMGLSVAV) threads the bilayer. The Cytoplasmic portion of the chain corresponds to 316 to 335 (NVRVGNALGAGNIEQAKKSS). Residues 336 to 356 (AVALLVTELIAVVFCVMLLSC) form a helical membrane-spanning segment. Residues 357 to 369 (KDLVGYIFTSDRD) are Extracellular-facing. The chain crosses the membrane as a helical span at residues 370–390 (IIALVAQVTPIYAVSHLFESL). The Cytoplasmic portion of the chain corresponds to 391-407 (AGTSGGILRGSGNQKFG). The chain crosses the membrane as a helical span at residues 408–430 (AIVNAIGYYVVGLPIGIALMFAA). The Extracellular segment spans residues 431–433 (KLG). The chain crosses the membrane as a helical span at residues 434-456 (VIGLWLGIVVCAVSQAVCFLGFI). Over 457–544 (ARLNWTKACQ…LSGKQLALRR (88 aa)) the chain is Cytoplasmic. Residues 545-565 (GLLLLGVILVLLAGILVKVYV) form a helical membrane-spanning segment. Over 566 to 568 (RTQ) the chain is Extracellular.

This sequence belongs to the multi antimicrobial extrusion (MATE) (TC 2.A.66.1) family. In terms of tissue distribution, predominantly expressed in kidney and liver.

The protein localises to the cell membrane. It localises to the apical cell membrane. It catalyses the reaction thiamine(out) + H(+)(in) = thiamine(in) + H(+)(out). It carries out the reaction estrone 3-sulfate(in) + H(+)(out) = estrone 3-sulfate(out) + H(+)(in). The enzyme catalyses creatinine(in) + H(+)(out) = creatinine(out) + H(+)(in). The catalysed reaction is agmatine(in) + H(+)(out) = agmatine(out) + H(+)(in). Its function is as follows. Multidrug efflux pump that functions as a H(+)/organic cation antiporter. Plays a physiological role in the excretion of cationic compounds including endogenous metabolites, drugs, toxins through the kidney and liver, into urine and bile respectively. Mediates the efflux of endogenous compounds such as creatinine, vitamin B1/thiamine, agmatine and estrone-3-sulfate. May also contribute to regulate the transport of cationic compounds in testis across the blood-testis-barrier. This chain is Multidrug and toxin extrusion protein 1 (SLC47A1), found in Oryctolagus cuniculus (Rabbit).